The primary structure comprises 262 residues: MAGTTAEYISHHLSFLASGDGFWAVHLDTLFFSLLAGVIFLFVFSRVAKNATSGVPGKLQCFVEIVIGWVDGLVKDNFHGPRNVIAPLALTIFCWVFIMNAIDLVPVDFLPQLANMFGIHYLRAVPTADISATLGMSICVFFLILFYTVKSKGFGGLVKEYTLHPFNHWAFIPVNFILETVTLLAKPISLAFRLFGNMYAGELIFILIAVMYMADNFALQALGIPLHLVWAIFHILVITLQAFIFMMLTIVYLSIAYNKADH.

The next 5 helical transmembrane spans lie at 24–44 (AVHL…LFVF), 84–104 (VIAP…AIDL), 129–149 (DISA…FYTV), 194–214 (LFGN…MYMA), and 228–248 (LVWA…FMML).

This sequence belongs to the ATPase A chain family. F-type ATPases have 2 components, CF(1) - the catalytic core - and CF(0) - the membrane proton channel. CF(1) has five subunits: alpha(3), beta(3), gamma(1), delta(1), epsilon(1). CF(0) has three main subunits: a(1), b(2) and c(9-12). The alpha and beta chains form an alternating ring which encloses part of the gamma chain. CF(1) is attached to CF(0) by a central stalk formed by the gamma and epsilon chains, while a peripheral stalk is formed by the delta and b chains.

The protein resides in the cell inner membrane. Its function is as follows. Key component of the proton channel; it plays a direct role in the translocation of protons across the membrane. This chain is ATP synthase subunit a, found in Actinobacillus pleuropneumoniae serotype 3 (strain JL03).